We begin with the raw amino-acid sequence, 384 residues long: MTESTFAVETFSMDSMSPSPGAEIPRLTVSPADTTLKFEDLVPEGLPKVDTPKPAEKKPVKKRKSWGQELPTPKTNLPPRKRAKTEDEKEQRRIERVLRNRAAAQISRERKRLEIEKLEGEKLKIEQQNEFLLRRLSQMEAENNRLSQQVAKLASEIQTSKSNPGSPASASASASTSSISATLAPSTSPTLAPVLFKQENDLLDNIDSIPFTINPDPSTTTTTTTTTTTSNNISSTSSTTLSPADLDHSSATPSDLAQHPAAVFHLNIPLLREHDHVHPPPLSDADLSRLFDADSSSEPDLSFLEDGFSLELLPDSDLGPFAFDSLVDLGPDEDNQQQQQQLQQKLDDSIGFPEQTPLPASGLQPSFGASLERCDEQGIAAGAQ.

Polar residues predominate over residues 1–18 (MTESTFAVETFSMDSMSP). 2 disordered regions span residues 1–27 (MTESTFAVETFSMDSMSPSPGAEIPRL) and 41–94 (LVPE…QRRI). The span at 84–94 (KTEDEKEQRRI) shows a compositional bias: basic and acidic residues. In terms of domain architecture, bZIP spans 90–153 (EQRRIERVLR…NRLSQQVAKL (64 aa)). A basic motif region spans residues 92–101 (RRIERVLRNR). The segment at 106–113 (ISRERKRL) is leucine-zipper. Disordered regions lie at residues 208 to 256 (SIPF…PSDL) and 331 to 384 (PDED…AGAQ). A compositionally biased stretch (low complexity) spans 218-240 (STTTTTTTTTTTSNNISSTSSTT).

Belongs to the bZIP family.

The protein resides in the nucleus. Functionally, master transcriptional regulator of the unfolded protein response (UPR) that recognizes and binds to the UPR element (UPRE) in the promoter of UPR-regulated genes. Exposure to antifungals and ER-stressing agents initiates the activation of hacA which occurs when a 20 nucleotide fragment is removed from part of the exon-2 and part of intron-2, which in turn promotes the arisen of the DNA binding site motif and a dimer interface domain. Modulates the expression of genes related to cell wall synthesis, ergosterol biosynthesis, pigmentation, heat shock proteins, and the genes coding for mannosyltransferase enzymes. Plays a key role in both response to stress and host-pathogen interaction. This Trichophyton rubrum (strain ATCC MYA-4607 / CBS 118892) (Athlete's foot fungus) protein is Transcriptional regulator of the unfolded protein response hacA.